We begin with the raw amino-acid sequence, 484 residues long: Protein nucleotidyltransferase YdiU (484 aa).

Residues glycine 81, glycine 83, arginine 84, lysine 103, aspartate 115, glycine 116, arginine 166, and arginine 173 each contribute to the ATP site. Aspartate 244 acts as the Proton acceptor in catalysis. Positions 245 and 254 each coordinate Mg(2+). Aspartate 254 contacts ATP.

It belongs to the SELO family. Mg(2+) is required as a cofactor. Requires Mn(2+) as cofactor.

It catalyses the reaction L-seryl-[protein] + ATP = 3-O-(5'-adenylyl)-L-seryl-[protein] + diphosphate. It carries out the reaction L-threonyl-[protein] + ATP = 3-O-(5'-adenylyl)-L-threonyl-[protein] + diphosphate. The catalysed reaction is L-tyrosyl-[protein] + ATP = O-(5'-adenylyl)-L-tyrosyl-[protein] + diphosphate. The enzyme catalyses L-histidyl-[protein] + UTP = N(tele)-(5'-uridylyl)-L-histidyl-[protein] + diphosphate. It catalyses the reaction L-seryl-[protein] + UTP = O-(5'-uridylyl)-L-seryl-[protein] + diphosphate. It carries out the reaction L-tyrosyl-[protein] + UTP = O-(5'-uridylyl)-L-tyrosyl-[protein] + diphosphate. In terms of biological role, nucleotidyltransferase involved in the post-translational modification of proteins. It can catalyze the addition of adenosine monophosphate (AMP) or uridine monophosphate (UMP) to a protein, resulting in modifications known as AMPylation and UMPylation. The sequence is that of Protein nucleotidyltransferase YdiU from Shewanella baltica (strain OS223).